The sequence spans 239 residues: uncharacterized protein (239 aa).

Its subcellular location is the endoplasmic reticulum. It localises to the golgi apparatus. This is an uncharacterized protein from Schizosaccharomyces pombe (strain 972 / ATCC 24843) (Fission yeast).